Consider the following 462-residue polypeptide: MATTTGAKRGIWPMIRRIAASDRISGLIMLGFALAGLVLANLPLTAHAFEAVAETHVFIPHTNLDLPIGHWAQDGLLTIFFLTVGLELKQELTTGSLANPKAAAVPMLCAVGGMITPPILFLATTALFSQFGPGEPGSLILATTGSSIPFAEMSHGWAVPTATDIAFSLAVLALFAKALPGSIRAFLMTLATVDDLLAIILIAVFFSSVNAWYWFIGIAVCAVVWAHLVRLKKVPWIAVGVVGILAWIMMFEAGIHPTLAGVLVGLLTPARVMHGEYSPRAERYADKLKPFSALLALPIFALFATGVHFESMSPLLLLSPLVIALIVALVVGKPLGIIVTAWLATHVGGLKMAKGLRVRDMIPAAVACGIGFTVSFLIASLAYTNQELSAEARFGVLVASLIAAAISGVLLSRQSKRFEQAAAVAAAEADAESDVNTHSDELAEHSITLADGTESVEIDFRR.

Transmembrane regions (helical) follow at residues 24-44 (ISGL…NLPL), 66-86 (LPIG…TVGL), 102-122 (AAAV…ILFL), 156-176 (GWAV…ALFA), 196-216 (LLAI…YWFI), 235-255 (PWIA…EAGI), 256-275 (HPTL…VMHG), 290-310 (PFSA…VHFE), 312-332 (MSPL…LVVG), 361-381 (MIPA…IASL), and 392-412 (ARFG…VLLS).

It belongs to the NhaA Na(+)/H(+) (TC 2.A.33) antiporter family.

It is found in the cell membrane. It carries out the reaction Na(+)(in) + 2 H(+)(out) = Na(+)(out) + 2 H(+)(in). In terms of biological role, na(+)/H(+) antiporter that extrudes sodium in exchange for external protons. This Bifidobacterium breve (strain NCIMB 8807 / UCC2003) protein is Na(+)/H(+) antiporter NhaA.